Here is a 128-residue protein sequence, read N- to C-terminus: Small ribosomal subunit protein uS11 (128 aa).

This sequence belongs to the universal ribosomal protein uS11 family. As to quaternary structure, part of the 30S ribosomal subunit. Interacts with proteins S7 and S18. Binds to IF-3.

Located on the platform of the 30S subunit, it bridges several disparate RNA helices of the 16S rRNA. Forms part of the Shine-Dalgarno cleft in the 70S ribosome. In Desulforudis audaxviator (strain MP104C), this protein is Small ribosomal subunit protein uS11.